Reading from the N-terminus, the 157-residue chain is SsrA-binding protein (157 aa).

It belongs to the SmpB family.

The protein localises to the cytoplasm. Its function is as follows. Required for rescue of stalled ribosomes mediated by trans-translation. Binds to transfer-messenger RNA (tmRNA), required for stable association of tmRNA with ribosomes. tmRNA and SmpB together mimic tRNA shape, replacing the anticodon stem-loop with SmpB. tmRNA is encoded by the ssrA gene; the 2 termini fold to resemble tRNA(Ala) and it encodes a 'tag peptide', a short internal open reading frame. During trans-translation Ala-aminoacylated tmRNA acts like a tRNA, entering the A-site of stalled ribosomes, displacing the stalled mRNA. The ribosome then switches to translate the ORF on the tmRNA; the nascent peptide is terminated with the 'tag peptide' encoded by the tmRNA and targeted for degradation. The ribosome is freed to recommence translation, which seems to be the essential function of trans-translation. This Clostridium kluyveri (strain NBRC 12016) protein is SsrA-binding protein.